We begin with the raw amino-acid sequence, 296 residues long: 4-hydroxy-tetrahydrodipicolinate synthase (296 aa).

Threonine 47 contacts pyruvate. Tyrosine 136 functions as the Proton donor/acceptor in the catalytic mechanism. Lysine 164 serves as the catalytic Schiff-base intermediate with substrate. Valine 206 contacts pyruvate.

It belongs to the DapA family. In terms of assembly, homotetramer; dimer of dimers.

Its subcellular location is the cytoplasm. It catalyses the reaction L-aspartate 4-semialdehyde + pyruvate = (2S,4S)-4-hydroxy-2,3,4,5-tetrahydrodipicolinate + H2O + H(+). Its pathway is amino-acid biosynthesis; L-lysine biosynthesis via DAP pathway; (S)-tetrahydrodipicolinate from L-aspartate: step 3/4. In terms of biological role, catalyzes the condensation of (S)-aspartate-beta-semialdehyde [(S)-ASA] and pyruvate to 4-hydroxy-tetrahydrodipicolinate (HTPA). This is 4-hydroxy-tetrahydrodipicolinate synthase from Thermosynechococcus vestitus (strain NIES-2133 / IAM M-273 / BP-1).